The chain runs to 258 residues: SMH class II histocompatibility antigen, beta-1 chain (258 aa).

A signal peptide spans 1–29 (MMVLPVPVAPWTAALTVLLMVLNKSVVQG). Residues 30–121 (RTTPENYLFR…LNQRLSQSLI (92 aa)) form a beta-1 region. Residues 30–225 (RTTPENYLFR…RAQSDSARNK (196 aa)) are Extracellular-facing. Disulfide bonds link C44–C106 and C144–C200. Residues 122-215 (AQPKVHVSPS…SLDRPITVEW (94 aa)) are beta-2. The 89-residue stretch at 124-212 (PKVHVSPSKG…EHPSLDRPIT (89 aa)) folds into the Ig-like C1-type domain. The tract at residues 216-225 (RAQSDSARNK) is connecting peptide. N224 carries an N-linked (GlcNAc...) asparagine glycan. A helical membrane pass occupies residues 226–246 (TLTGVGGLVLGLIFLAVGLIM). Residues 247-258 (HVRSKKAQRGSR) lie on the Cytoplasmic side of the membrane.

Belongs to the MHC class II family.

It localises to the membrane. This Spalax ehrenbergi (Middle East blind mole rat) protein is SMH class II histocompatibility antigen, beta-1 chain.